The following is a 933-amino-acid chain: Bromodomain testis-specific protein (933 aa).

Positions 1–21 are disordered; it reads MSMSSRHLHSSIVNPPPPEYI. In terms of domain architecture, Bromo 1 spans 28 to 134; that stretch reads RLTNQLQYLE…KVFMEKIAEM (107 aa). The short motif at 214–225 is the Nuclear localization signal element; the sequence is KGIKRKADTTTP. Residues 235–263 form a disordered region; it reads ESSPTLSEPKPNKILSGTEKTRSAETSAV. One can recognise a Bromo 2 domain in the interval 278 to 385; that stretch reads NQICEQLKHC…DVFEGMFAKI (108 aa). Disordered regions lie at residues 398-425, 576-610, and 627-662; these read RYKT…DERA, KPSS…QLSS, and GGPS…ESAT. A compositionally biased stretch (low complexity) spans 404 to 418; it reads EESSSSSSSEQSSSS. The stretch at 423–448 forms a coiled coil; the sequence is ERAQHLALLQEQLRAVQEQLKALTET. An NET domain is found at 495–577; that stretch reads VSDEEEDVKP…VCLRKRPKKP (83 aa). A compositionally biased stretch (basic and acidic residues) spans 584-603; it reads KSKEQLNKEKKQELEKRLRD. A compositionally biased stretch (low complexity) spans 630-660; the sequence is SRLSESSTSSSASDVSNSSDSSSSDSSDSES. Residues 829–917 adopt a coiled-coil conformation; that stretch reads AKEERERALK…RREAMAGTID (89 aa).

Belongs to the BET family.

It localises to the nucleus. Functionally, testis-specific chromatin protein that specifically binds histone H4 acetylated at 'Lys-5' and 'Lys-8' (H4K5ac and H4K8ac, respectively) and plays a key role in spermatogenesis. Required in late pachytene spermatocytes: plays a role in meiotic and post-meiotic cells by binding to acetylated histones at the promoter of specific meiotic and post-meiotic genes, facilitating their activation at the appropriate time. In the post-meiotic phase of spermatogenesis, binds to hyperacetylated histones and participates in their general removal from DNA. Also recognizes and binds a subset of butyrylated histones: able to bind histone H4 butyrylated at 'Lys-8' (H4K8ac), while it is not able to bind H4 butyrylated at 'Lys-5' (H4K5ac). The protein is Bromodomain testis-specific protein (brdt) of Xenopus tropicalis (Western clawed frog).